A 506-amino-acid polypeptide reads, in one-letter code: Tetratricopeptide repeat protein 8 (506 aa).

Residues 83 to 112 (RPGTSFARPKTSAKGVNPILRPTTNAGRPL) form a disordered region. TPR repeat units follow at residues 217-250 (YYWK…KKLI), 251-283 (ETFA…FPEN), 284-317 (VTML…ESNN), 319-351 (EAIA…GVSS), 353-385 (ELFL…MTDD), 388-421 (ADVW…DPDH), 423-455 (ESLV…NPYM), and 456-489 (FEGN…FPEH).

In terms of assembly, part of BBSome complex, that contains at least bbs-1, bbs-2, bbs-4, bbs-5, osm-12, bbs-8/ttc-8 and bbs-9. As to expression, expressed in head and tail neurons. Expressed in ciliated male tail-neurons. Expressed in thermosensory and CO(2) sensory AFD neurons.

The protein resides in the cell projection. The protein localises to the cilium. It localises to the cytoplasm. Its subcellular location is the cytoskeleton. It is found in the cilium basal body. The protein resides in the cilium axoneme. In terms of biological role, component of the BBSome complex. The BBSome complex is thought to function as a coat complex required for sorting of specific membrane proteins to the primary cilia. The BBSome complex is required for ciliogenesis but is dispensable for centriolar satellite function. Required for proper BBSome complex assembly and its ciliary localization. Required for cilia biogenesis and both the assembly and movement of intraflagellar transport proteins along the ciliary axoneme. Plays a role in guanylyl cyclase localization in the ring-like structures at the base of the finger compartment in AFD sensory neurons. The polypeptide is Tetratricopeptide repeat protein 8 (Caenorhabditis elegans).